Here is a 710-residue protein sequence, read N- to C-terminus: Protein phosphatase 1 regulatory subunit 37 (710 aa).

The span at 1–12 shows a compositional bias: pro residues; the sequence is MEIPPQEAPPGP. The tract at residues 1–46 is disordered; it reads MEIPPQEAPPGPGADADADAEAEEAPAEAGSSSGASPPTDGRLKAA. Residues 16 to 26 show a composition bias toward acidic residues; that stretch reads ADADAEAEEAP. Residues 27-38 are compositionally biased toward low complexity; the sequence is AEAGSSSGASPP. A phosphoserine mark is found at Ser54 and Ser60. 5 LRR repeats span residues 224 to 244, 252 to 273, 281 to 301, 310 to 330, and 338 to 358; these read SLAV…MLLA, NLQE…AQLG, SLQI…AYIC, GLVT…AFLG, and SLET…RNLK. The disordered stretch occupies residues 487 to 677; it reads PLEESGDLPA…APPGLEAKGS (191 aa). Positions 512-531 are enriched in acidic residues; that stretch reads SDSDSDSDREEQEEEEEDQS. Residues 543-565 are compositionally biased toward low complexity; it reads SSSAPCPALLPSTDSLGPGDKSP. Position 581 is a phosphoserine (Ser581). Positions 603–624 are enriched in pro residues; sequence PPVPPTSVSSPPPSPPSPPASP. Residues 637-649 are compositionally biased toward polar residues; that stretch reads SEAQPQTEPSQAG. Positions 656-676 are enriched in low complexity; sequence LKPEFALALAPEAPPGLEAKG.

This sequence belongs to the PPP1R37 family. Interacts with PPP1CA.

Its function is as follows. Inhibits phosphatase activity of protein phosphatase 1 (PP1) complexes. This is Protein phosphatase 1 regulatory subunit 37 (Ppp1r37) from Rattus norvegicus (Rat).